Consider the following 181-residue polypeptide: Small ribosomal subunit protein uS4 (181 aa).

The S4 RNA-binding domain occupies 108–172 (RRLQTQVYRR…SPLVSDIHSE (65 aa)).

This sequence belongs to the universal ribosomal protein uS4 family. In terms of assembly, part of the 30S ribosomal subunit. Contacts protein S5. The interaction surface between S4 and S5 is involved in control of translational fidelity.

Functionally, one of the primary rRNA binding proteins, it binds directly to 16S rRNA where it nucleates assembly of the body of the 30S subunit. Its function is as follows. With S5 and S12 plays an important role in translational accuracy. The chain is Small ribosomal subunit protein uS4 from Methanospirillum hungatei JF-1 (strain ATCC 27890 / DSM 864 / NBRC 100397 / JF-1).